We begin with the raw amino-acid sequence, 298 residues long: Phosphatidylserine decarboxylase proenzyme (298 aa).

Active-site charge relay system; for autoendoproteolytic cleavage activity residues include aspartate 113, histidine 169, and serine 256. The Schiff-base intermediate with substrate; via pyruvic acid; for decarboxylase activity role is filled by serine 256. Serine 256 bears the Pyruvic acid (Ser); by autocatalysis mark.

This sequence belongs to the phosphatidylserine decarboxylase family. PSD-B subfamily. Prokaryotic type II sub-subfamily. As to quaternary structure, heterodimer of a large membrane-associated beta subunit and a small pyruvoyl-containing alpha subunit. The cofactor is pyruvate. Is synthesized initially as an inactive proenzyme. Formation of the active enzyme involves a self-maturation process in which the active site pyruvoyl group is generated from an internal serine residue via an autocatalytic post-translational modification. Two non-identical subunits are generated from the proenzyme in this reaction, and the pyruvate is formed at the N-terminus of the alpha chain, which is derived from the carboxyl end of the proenzyme. The autoendoproteolytic cleavage occurs by a canonical serine protease mechanism, in which the side chain hydroxyl group of the serine supplies its oxygen atom to form the C-terminus of the beta chain, while the remainder of the serine residue undergoes an oxidative deamination to produce ammonia and the pyruvoyl prosthetic group on the alpha chain. During this reaction, the Ser that is part of the protease active site of the proenzyme becomes the pyruvoyl prosthetic group, which constitutes an essential element of the active site of the mature decarboxylase.

The protein resides in the cell membrane. The enzyme catalyses a 1,2-diacyl-sn-glycero-3-phospho-L-serine + H(+) = a 1,2-diacyl-sn-glycero-3-phosphoethanolamine + CO2. Its pathway is phospholipid metabolism; phosphatidylethanolamine biosynthesis; phosphatidylethanolamine from CDP-diacylglycerol: step 2/2. Functionally, catalyzes the formation of phosphatidylethanolamine (PtdEtn) from phosphatidylserine (PtdSer). In Desulfitobacterium hafniense (strain DSM 10664 / DCB-2), this protein is Phosphatidylserine decarboxylase proenzyme.